A 598-amino-acid chain; its full sequence is Chaperone protein DnaK (598 aa).

A Phosphothreonine; by autocatalysis modification is found at threonine 180.

It belongs to the heat shock protein 70 family.

Acts as a chaperone. The polypeptide is Chaperone protein DnaK (Thermosipho africanus (strain TCF52B)).